A 213-amino-acid chain; its full sequence is MLAILDYKAGNQTSVRRALDHLGIPCVITADPEVIQGAAGVIFPGVGAAGQAMNELVTTGLDEVLRRQVQAGRPLLGICVGCQIMLDYSQENDTKALGIIPGECRLFNPAWTDEDGAPIRVPHMGWNHIVQRRPCELLKGIEPEAEFYFVHSYYPAPPEEYVIATCTYGAEFCAIHGGPGLWAVQFHPEKSGRPGLRLLANFHRYCTEAADAQ.

Residues M1–A212 form the Glutamine amidotransferase type-1 domain. C79 acts as the Nucleophile in catalysis. Catalysis depends on residues H187 and E189.

In terms of assembly, heterodimer of HisH and HisF.

The protein resides in the cytoplasm. The catalysed reaction is 5-[(5-phospho-1-deoxy-D-ribulos-1-ylimino)methylamino]-1-(5-phospho-beta-D-ribosyl)imidazole-4-carboxamide + L-glutamine = D-erythro-1-(imidazol-4-yl)glycerol 3-phosphate + 5-amino-1-(5-phospho-beta-D-ribosyl)imidazole-4-carboxamide + L-glutamate + H(+). The enzyme catalyses L-glutamine + H2O = L-glutamate + NH4(+). It functions in the pathway amino-acid biosynthesis; L-histidine biosynthesis; L-histidine from 5-phospho-alpha-D-ribose 1-diphosphate: step 5/9. Functionally, IGPS catalyzes the conversion of PRFAR and glutamine to IGP, AICAR and glutamate. The HisH subunit catalyzes the hydrolysis of glutamine to glutamate and ammonia as part of the synthesis of IGP and AICAR. The resulting ammonia molecule is channeled to the active site of HisF. The chain is Imidazole glycerol phosphate synthase subunit HisH from Nitratidesulfovibrio vulgaris (strain ATCC 29579 / DSM 644 / CCUG 34227 / NCIMB 8303 / VKM B-1760 / Hildenborough) (Desulfovibrio vulgaris).